Here is a 307-residue protein sequence, read N- to C-terminus: GTPase Era (307 aa).

In terms of domain architecture, Era-type G spans 17–186; that stretch reads RCGFVAIVGR…LELLKPYLPE (170 aa). The segment at 25 to 32 is G1; sequence GRPNVGKS. 25–32 provides a ligand contact to GTP; sequence GRPNVGKS. The G2 stretch occupies residues 51 to 55; sequence QTTRN. The tract at residues 72-75 is G3; that stretch reads DTPG. Residues 72-76 and 133-136 each bind GTP; these read DTPGF and NKID. A G4 region spans residues 133-136; it reads NKID. The tract at residues 165 to 167 is G5; it reads VSA. Residues 217-293 form the KH type-2 domain; the sequence is LGEELPYAMN…FLKVWVKVKS (77 aa).

Belongs to the TRAFAC class TrmE-Era-EngA-EngB-Septin-like GTPase superfamily. Era GTPase family. Monomer.

The protein resides in the cytoplasm. It localises to the cell inner membrane. Its function is as follows. An essential GTPase that binds both GDP and GTP, with rapid nucleotide exchange. Plays a role in 16S rRNA processing and 30S ribosomal subunit biogenesis and possibly also in cell cycle regulation and energy metabolism. The sequence is that of GTPase Era from Neisseria meningitidis serogroup C / serotype 2a (strain ATCC 700532 / DSM 15464 / FAM18).